Here is a 620-residue protein sequence, read N- to C-terminus: Glutathione-regulated potassium-efflux system protein KefC (620 aa).

12 consecutive transmembrane segments (helical) span residues 4-24 (HTLV…PIAV), 26-46 (LGLG…PWGL), 54-74 (SILH…GLEL), 90-110 (GALQ…LLGL), 114-134 (VAEL…MQAM), 149-169 (FAVL…IPLL), 178-198 (MGAF…VVLL), 218-238 (VFSA…EEVG), 270-290 (GLLL…GTLL), 294-314 (LRIV…LWLI), 327-347 (WFAV…GAAQ), and 359-379 (SLTL…VILN). The RCK N-terminal domain occupies 399–518 (QPRVIIAGFG…AGVEKPERET (120 aa)). The interval 597–620 (GWQGTEEGKHTGNMADEPETKPSS) is disordered.

Belongs to the monovalent cation:proton antiporter 2 (CPA2) transporter (TC 2.A.37) family. KefC subfamily. In terms of assembly, homodimer. Interacts with the regulatory subunit KefF.

The protein resides in the cell inner membrane. Its function is as follows. Pore-forming subunit of a potassium efflux system that confers protection against electrophiles. Catalyzes K(+)/H(+) antiport. This is Glutathione-regulated potassium-efflux system protein KefC from Escherichia coli O139:H28 (strain E24377A / ETEC).